We begin with the raw amino-acid sequence, 361 residues long: Cyclin-dependent kinase 10 (361 aa).

The Protein kinase domain occupies 37-321 (FEKLNRIGEG…AGDCLESSYF (285 aa)). Residues 43 to 51 (IGEGTYGIV) and K66 each bind ATP. The Proton acceptor role is filled by D161. At T194 the chain carries Phosphothreonine. The disordered stretch occupies residues 332–361 (LMPTFPHHRNKRATPATSLGTESQSRRGRP).

Belongs to the protein kinase superfamily. CMGC Ser/Thr protein kinase family. CDC2/CDKX subfamily. As to quaternary structure, heterodimer with CCNQ, the interaction is required for kinase activity. Interacts with ETS2. Interacts with PRK2.

It localises to the cytoplasm. Its subcellular location is the cytoskeleton. It is found in the cilium basal body. It carries out the reaction L-seryl-[protein] + ATP = O-phospho-L-seryl-[protein] + ADP + H(+). The catalysed reaction is L-threonyl-[protein] + ATP = O-phospho-L-threonyl-[protein] + ADP + H(+). Functionally, cyclin-dependent kinase that phosphorylates the transcription factor ETS2 (in vitro) and positively controls its proteasomal degradation (in cells). Involved in the regulation of actin cytoskeleton organization through the phosphorylation of actin dynamics regulators such as PKN2. Is a negative regulator of ciliogenesis through phosphorylation of PKN2 and promotion of RhoA signaling. This chain is Cyclin-dependent kinase 10 (CDK10), found in Bos taurus (Bovine).